The primary structure comprises 477 residues: Bifunctional protein HldE (477 aa).

The segment at 1–318 (MKVTLPEFER…ENAVRGRADT (318 aa)) is ribokinase. At K179 the chain carries N6-acetyllysine. 195–198 (NLSE) is a binding site for ATP. D264 is a catalytic residue. Residues 344–477 (MTNGVFDILH…IKKIQLDKKG (134 aa)) form a cytidylyltransferase region.

The protein in the N-terminal section; belongs to the carbohydrate kinase PfkB family. It in the C-terminal section; belongs to the cytidylyltransferase family. As to quaternary structure, homodimer.

The enzyme catalyses D-glycero-beta-D-manno-heptose 7-phosphate + ATP = D-glycero-beta-D-manno-heptose 1,7-bisphosphate + ADP + H(+). The catalysed reaction is D-glycero-beta-D-manno-heptose 1-phosphate + ATP + H(+) = ADP-D-glycero-beta-D-manno-heptose + diphosphate. It functions in the pathway nucleotide-sugar biosynthesis; ADP-L-glycero-beta-D-manno-heptose biosynthesis; ADP-L-glycero-beta-D-manno-heptose from D-glycero-beta-D-manno-heptose 7-phosphate: step 1/4. The protein operates within nucleotide-sugar biosynthesis; ADP-L-glycero-beta-D-manno-heptose biosynthesis; ADP-L-glycero-beta-D-manno-heptose from D-glycero-beta-D-manno-heptose 7-phosphate: step 3/4. Functionally, catalyzes the phosphorylation of D-glycero-D-manno-heptose 7-phosphate at the C-1 position to selectively form D-glycero-beta-D-manno-heptose-1,7-bisphosphate. In terms of biological role, catalyzes the ADP transfer from ATP to D-glycero-beta-D-manno-heptose 1-phosphate, yielding ADP-D-glycero-beta-D-manno-heptose. The polypeptide is Bifunctional protein HldE (Escherichia coli O81 (strain ED1a)).